Reading from the N-terminus, the 221-residue chain is Oxaloacetate tautomerase FAHD1, mitochondrial (221 aa).

The transit peptide at 1 to 24 (MASTKPLSRFWEWGKNIVCVGRNY) directs the protein to the mitochondrion. An oxalate-binding site is contributed by Arg-22. Residue Ser-37 is modified to Phosphoserine. Mg(2+) is bound by residues Glu-68, Glu-70, and Asp-99. At Lys-110 the chain carries N6-acetyllysine. Lys-112 is modified (N6-succinyllysine). Lys-120 serves as a coordination point for oxalate.

This sequence belongs to the FAH family. Homodimer. Mg(2+) is required as a cofactor. It depends on Mn(2+) as a cofactor. In terms of tissue distribution, ubiquitous with higher expression in the liver and the kidney (at protein level).

It is found in the mitochondrion. The protein localises to the cytoplasm. It localises to the cytosol. It catalyses the reaction oxaloacetate = enol-oxaloacetate. It carries out the reaction oxaloacetate + H(+) = pyruvate + CO2. The catalysed reaction is a 3-acylpyruvate + H2O = a carboxylate + pyruvate + H(+). The enzyme catalyses acetylpyruvate + H2O = acetate + pyruvate + H(+). It catalyses the reaction 3-fumarylpyruvate + H2O = fumarate + pyruvate + H(+). Oxaloacetate decarboxylation is potently and competitively inhibited by oxalate. In terms of biological role, tautomerase that converts enol-oxaloacetate, a strong inhibitor of succinate dehydrogenase, to the physiological keto form of oxaloacetate. It is thereby required to maximize aerobic respiration efficiency by preventing succinate dehydrogenase inhibition. Also acts as a weak oxaloacetate decarboxylase (ODx), catalyzing the decarboxylation of oxaloacetate (OAA) to pyruvate and CO(2), and as such is likely a regulatory enzyme in the TCA cycle. Also displays acylpyruvase activity, being able to hydrolyze acetylpyruvate and fumarylpyruvate in vitro. This chain is Oxaloacetate tautomerase FAHD1, mitochondrial, found in Mus musculus (Mouse).